The sequence spans 331 residues: UPF0194 membrane protein YbhG (331 aa).

The N-terminal stretch at methionine 1–alanine 19 is a signal peptide. The stretch at glutamate 107 to alanine 208 forms a coiled coil.

This sequence belongs to the UPF0194 family.

The protein resides in the periplasm. This Salmonella agona (strain SL483) protein is UPF0194 membrane protein YbhG.